Here is a 633-residue protein sequence, read N- to C-terminus: Chaperone protein HtpG (633 aa).

The tract at residues 1-344 is a; substrate-binding; sequence MSLQPQAETL…SNDLPLNISR (344 aa). Residues 345–560 are b; the sequence is ELLQSNEVIN…ENEMSGHLQR (216 aa). Residues 561-633 are c; that stretch reads LLIQTGQDFM…KGLNELLLDS (73 aa).

Belongs to the heat shock protein 90 family. In terms of assembly, homodimer.

Its subcellular location is the cytoplasm. Its function is as follows. Molecular chaperone. Has ATPase activity. The polypeptide is Chaperone protein HtpG (Coxiella burnetii (strain RSA 331 / Henzerling II)).